Reading from the N-terminus, the 455-residue chain is 23S rRNA (uracil(1939)-C(5))-methyltransferase RlmD (455 aa).

Residues 12-70 form the TRAM domain; it reads SKQLSAKLSLSVTQLDHLGAGIAQHQGKIVFIPGVLPGETATVQFVEQKKSYAKAKLIS. The [4Fe-4S] cluster site is built by C83, C89, C92, and C174. Positions 288, 317, 322, 338, 365, and 385 each coordinate S-adenosyl-L-methionine. C411 serves as the catalytic Nucleophile.

It belongs to the class I-like SAM-binding methyltransferase superfamily. RNA M5U methyltransferase family. RlmD subfamily.

The enzyme catalyses uridine(1939) in 23S rRNA + S-adenosyl-L-methionine = 5-methyluridine(1939) in 23S rRNA + S-adenosyl-L-homocysteine + H(+). Its function is as follows. Catalyzes the formation of 5-methyl-uridine at position 1939 (m5U1939) in 23S rRNA. In Shewanella frigidimarina (strain NCIMB 400), this protein is 23S rRNA (uracil(1939)-C(5))-methyltransferase RlmD.